A 64-amino-acid polypeptide reads, in one-letter code: Large ribosomal subunit protein bL35 (64 aa).

Basic residues predominate over residues 1–15 (MPKSKTHSGTAKRFK). The segment at 1–23 (MPKSKTHSGTAKRFKVSGSGKIL) is disordered.

Belongs to the bacterial ribosomal protein bL35 family.

This chain is Large ribosomal subunit protein bL35, found in Rhodococcus jostii (strain RHA1).